The primary structure comprises 130 residues: Keratin, high-sulfur matrix protein, IIIA3A (130 aa).

As to expression, wool.

Its function is as follows. The keratin products of mammalian epidermal derivatives such as wool and hair consist of microfibrils embedded in a rigid matrix of other proteins. The matrix proteins include the high-sulfur and high-tyrosine keratins, having molecular weights of 6-20 kDa, whereas the microfibrils contain the larger, low-sulfur keratins (40-56 kDa). The protein is Keratin, high-sulfur matrix protein, IIIA3A of Ovis aries (Sheep).